The primary structure comprises 439 residues: Vitellogenin-1 (439 aa).

The N-terminal stretch at 1-20 (MNPMRVLSLLACLAVAALAK) is a signal peptide. A compositionally biased stretch (polar residues) spans 158 to 175 (QQQRQHGKNGNQDYQDQS). 2 disordered regions span residues 158–196 (QQQRQHGKNGNQDYQDQSNEQRKNQRTSSEEDYSEEVKN) and 407–439 (KSPFGRNAPAQKQSSYHGVHQAWNTNQDSKDYQ). The residue at position 171 (tyrosine 171) is a Phosphotyrosine. Serine 175, serine 185, and serine 186 each carry phosphoserine. At tyrosine 190 the chain carries Phosphotyrosine. Residue serine 191 is modified to Phosphoserine. Over residues 416–433 (AQKQSSYHGVHQAWNTNQ) the composition is skewed to polar residues. Serine 435 is subject to Phosphoserine.

The protein belongs to the AB hydrolase superfamily. Lipase family. In terms of processing, tyrosine sulfation occurs in the female only and plays an essential functional role. In terms of tissue distribution, expressed in females only.

Its subcellular location is the secreted. It is found in the vesicle. Functionally, vitellogenin is the major yolk protein of eggs where it is used as a food source during embryogenesis. Along with Yp2 and Yp3, and their receptor yl/yolkless, required for maintenance of microtubule plus-end orientation towards the posterior pole of oocytes. Involved in polarized localization of germ plasm components, such as osk mRNA and vas protein, to the oocyte posterior cortex. Receptor-mediated endocytosis by yl/yolkless is crucial for actin reorganization, mediated by osk isoform A/Long, required to anchor germ plasm components to the oocyte cortex. This is Vitellogenin-1 (Yp1) from Drosophila melanogaster (Fruit fly).